Here is a 198-residue protein sequence, read N- to C-terminus: A-type ATP synthase subunit E (198 aa).

The protein belongs to the V-ATPase E subunit family. Has multiple subunits with at least A(3), B(3), C, D, E, F, H, I and proteolipid K(x).

Its subcellular location is the cell membrane. Functionally, component of the A-type ATP synthase that produces ATP from ADP in the presence of a proton gradient across the membrane. This chain is A-type ATP synthase subunit E, found in Pyrococcus horikoshii (strain ATCC 700860 / DSM 12428 / JCM 9974 / NBRC 100139 / OT-3).